We begin with the raw amino-acid sequence, 224 residues long: Myogenin (224 aa).

Phosphoserine; by CaMK2G occurs at positions 77 and 79. Residues 81 to 132 form the bHLH domain; that stretch reads DRRRAATLREKRRLKKVNEAFEALKRSTLLNPNQRLPKVEILRSAIQYIERL. Thr-87 is modified (phosphothreonine; by CaMK2G).

Homodimer and heterodimer with E12; heterodimerization enhances MYOG DNA-binding and transcriptional activities. Interacts with SMARCA4/BRG1/BAF190A. Interacts (via C-terminal region) with SSRP1 and SUPT16H; the interaction is indicative of an interaction with the FACT complex. Interacts with CSRP3. Phosphorylated by CAMK2G on threonine and serine amino acids in a muscle activity-dependent manner. Phosphorylation of Thr-87 impairs both DNA-binding and trans-activation functions in contracting muscles.

It is found in the nucleus. Functionally, acts as a transcriptional activator that promotes transcription of muscle-specific target genes and plays a role in muscle differentiation, cell cycle exit and muscle atrophy. Essential for the development of functional embryonic skeletal fiber muscle differentiation. However is dispensable for postnatal skeletal muscle growth; phosphorylation by CAMK2G inhibits its transcriptional activity in respons to muscle activity. Required for the recruitment of the FACT complex to muscle-specific promoter regions, thus promoting gene expression initiation. During terminal myoblast differentiation, plays a role as a strong activator of transcription at loci with an open chromatin structure previously initiated by MYOD1. Together with MYF5 and MYOD1, co-occupies muscle-specific gene promoter core regions during myogenesis. Also cooperates with myocyte-specific enhancer factor MEF2D and BRG1-dependent recruitment of SWI/SNF chromatin-remodeling enzymes to alter chromatin structure at myogenic late gene promoters. Facilitates cell cycle exit during terminal muscle differentiation through the up-regulation of miR-20a expression, which in turn represses genes involved in cell cycle progression. Binds to the E-box containing (E1) promoter region of the miR-20a gene. Also plays a role in preventing reversal of muscle cell differentiation. Contributes to the atrophy-related gene expression in adult denervated muscles. Induces fibroblasts to differentiate into myoblasts. This is Myogenin (MYOG) from Homo sapiens (Human).